The following is a 680-amino-acid chain: DNA-directed RNA polymerase subunit beta' (680 aa).

Zn(2+) contacts are provided by cysteine 69, cysteine 71, cysteine 87, and cysteine 90. Residues aspartate 489, aspartate 491, and aspartate 493 each contribute to the Mg(2+) site.

It belongs to the RNA polymerase beta' chain family. RpoC1 subfamily. In plastids the minimal PEP RNA polymerase catalytic core is composed of four subunits: alpha, beta, beta', and beta''. When a (nuclear-encoded) sigma factor is associated with the core the holoenzyme is formed, which can initiate transcription. It depends on Mg(2+) as a cofactor. Zn(2+) serves as cofactor.

Its subcellular location is the plastid. It is found in the chloroplast. The catalysed reaction is RNA(n) + a ribonucleoside 5'-triphosphate = RNA(n+1) + diphosphate. DNA-dependent RNA polymerase catalyzes the transcription of DNA into RNA using the four ribonucleoside triphosphates as substrates. This chain is DNA-directed RNA polymerase subunit beta', found in Barbarea verna (Land cress).